Here is a 172-residue protein sequence, read N- to C-terminus: Small ribosomal subunit protein uS5 (172 aa).

The region spanning 17-80 is the S5 DRBM domain; it reads LREKMISVNR…EQARRNMFKV (64 aa).

The protein belongs to the universal ribosomal protein uS5 family. Part of the 30S ribosomal subunit. Contacts proteins S4 and S8.

Its function is as follows. With S4 and S12 plays an important role in translational accuracy. In terms of biological role, located at the back of the 30S subunit body where it stabilizes the conformation of the head with respect to the body. The protein is Small ribosomal subunit protein uS5 of Burkholderia thailandensis (strain ATCC 700388 / DSM 13276 / CCUG 48851 / CIP 106301 / E264).